The chain runs to 224 residues: UPF0173 metal-dependent hydrolase EF_1371 (224 aa).

This sequence belongs to the UPF0173 family.

The chain is UPF0173 metal-dependent hydrolase EF_1371 from Enterococcus faecalis (strain ATCC 700802 / V583).